The sequence spans 658 residues: MTSLAAGKPAPLGASYDGKGVNFALFSAHAERVELCVFDEQGNEQRFDLPARSGDIWHGWLAAAGPGLRYGYRVHGPWDPAQGHRFNPAKLLIDPSAHRVEGDLPDDERLHGGMWQPDRRDSAAVAPKSQVVDLRYDWRGDKPPRTPWGETVIYEAHVKGLTLLNPQLPEAIRGTYKALGHPAMIAYFKSLGISALELLPVAQFASEPRLQRMGLSNYWGYNPLAWFALDPRYASDPDRALDEFRDAVKALHAAGIEVILDIVLNHSAEIDLEGPTVSLRGIDNRSYYWVREDSDYHNWTGCGNTLNLSHPGVVEWARQCLRFWVDECHVDGFRFDLASVMGRTPEFRQDAPLFEAIRRDSVLSQVKLIAEPWDIGPGGYQVGNFPPLFAEWNDHFRDSARRFWLQQNVSLGDFAQRFAASSDLFARDGKPPSATVNLVTAHDGFTLRDCVCFNQKHNEANGEENRDGTNNNYSNNHGIEGLEANFAVIERRRASAHALLTTLLLAQGTPMLLAGDEQGHSQHGNNNAYCQDNALTWLDWRQANPGLTAFTAALIHLRRRIPALTRNRWWQEGDGNVRWLNRNAQPLTAAEWQQGAACMQIQLSDRWLLTLNATAEVVDMVLPEGEWRAVPPFAGEDNPVIMAVWHGPAHGVCVFQRS.

D336 acts as the Nucleophile in catalysis. E371 serves as the catalytic Proton donor.

The protein belongs to the glycosyl hydrolase 13 family.

It catalyses the reaction Hydrolysis of (1-&gt;6)-alpha-D-glucosidic linkages to branches with degrees of polymerization of three or four glucose residues in limit dextrin.. It participates in glycan degradation; glycogen degradation. Functionally, removes maltotriose and maltotetraose chains that are attached by 1,6-alpha-linkage to the limit dextrin main chain, generating a debranched limit dextrin. This is Glycogen debranching enzyme from Klebsiella pneumoniae subsp. pneumoniae (strain ATCC 700721 / MGH 78578).